Reading from the N-terminus, the 379-residue chain is Lipid-A-disaccharide synthase (379 aa).

This sequence belongs to the LpxB family.

The enzyme catalyses a lipid X + a UDP-2-N,3-O-bis[(3R)-3-hydroxyacyl]-alpha-D-glucosamine = a lipid A disaccharide + UDP + H(+). Its pathway is bacterial outer membrane biogenesis; LPS lipid A biosynthesis. In terms of biological role, condensation of UDP-2,3-diacylglucosamine and 2,3-diacylglucosamine-1-phosphate to form lipid A disaccharide, a precursor of lipid A, a phosphorylated glycolipid that anchors the lipopolysaccharide to the outer membrane of the cell. The protein is Lipid-A-disaccharide synthase of Vibrio campbellii (strain ATCC BAA-1116).